We begin with the raw amino-acid sequence, 299 residues long: Taste receptor type 2 member 50 (299 aa).

A topological domain (extracellular) is located at residue methionine 1. A helical membrane pass occupies residues 2 to 22 (ITFLYIFFSILILVLFVLGNF). The Cytoplasmic portion of the chain corresponds to 23 to 55 (ANGFIALVNFIDWVKRKKISSADQILTALAVSR). Residues 56–76 (IGLLWALLLNWYLTVLNPAFY) traverse the membrane as a helical segment. Residues 77–87 (SVELRITSYNA) are Extracellular-facing. Residues 88–108 (WVVTNHFSMWLAASLSIFYLL) traverse the membrane as a helical segment. Topologically, residues 109–126 (KIANFSNLIFLHLKRRVR) are cytoplasmic. Residues 127–147 (SVILVILLGTLIFLVCHLLVA) traverse the membrane as a helical segment. Over 148–181 (NMDESMWAEEYEGNMTGKMKLRNTVHLSYLTVTT) the chain is Extracellular. The N-linked (GlcNAc...) asparagine glycan is linked to asparagine 161. A helical transmembrane segment spans residues 182 to 202 (LWSFIPFTLSLISFLMLICSL). Residues 203-229 (CKHLKKMQLHGEGSQDLSTKVHIKALQ) are Cytoplasmic-facing. Residues 230-250 (TLISFLLLCAIFFLFLIISVW) form a helical membrane-spanning segment. The Extracellular segment spans residues 251–259 (SPRRLQNDP). Residues 260-280 (VVMVSKAVGNIYLAFDSFILI) form a helical membrane-spanning segment. Residues 281-299 (WRTKKLKHTFLLILCQIRC) are Cytoplasmic-facing.

This sequence belongs to the G-protein coupled receptor T2R family.

The protein localises to the membrane. In terms of biological role, receptor that may play a role in the perception of bitterness and is gustducin-linked. May play a role in sensing the chemical composition of the gastrointestinal content. The activity of this receptor may stimulate alpha gustducin, mediate PLC-beta-2 activation and lead to the gating of TRPM5. This chain is Taste receptor type 2 member 50 (TAS2R50), found in Gorilla gorilla gorilla (Western lowland gorilla).